Reading from the N-terminus, the 228-residue chain is Octanoyltransferase (228 aa).

One can recognise a BPL/LPL catalytic domain in the interval 30 to 214 (KKIGDTLLLL…YFGKVFGKSL (185 aa)). Substrate-binding positions include 75-82 (RGGDVTYH), 144-146 (AIG), and 157-159 (GFA). Cysteine 175 acts as the Acyl-thioester intermediate in catalysis.

The protein belongs to the LipB family.

It localises to the cytoplasm. The catalysed reaction is octanoyl-[ACP] + L-lysyl-[protein] = N(6)-octanoyl-L-lysyl-[protein] + holo-[ACP] + H(+). The protein operates within protein modification; protein lipoylation via endogenous pathway; protein N(6)-(lipoyl)lysine from octanoyl-[acyl-carrier-protein]: step 1/2. In terms of biological role, catalyzes the transfer of endogenously produced octanoic acid from octanoyl-acyl-carrier-protein onto the lipoyl domains of lipoate-dependent enzymes. Lipoyl-ACP can also act as a substrate although octanoyl-ACP is likely to be the physiological substrate. The chain is Octanoyltransferase from Caldicellulosiruptor bescii (strain ATCC BAA-1888 / DSM 6725 / KCTC 15123 / Z-1320) (Anaerocellum thermophilum).